The chain runs to 441 residues: tRNA (adenine(37)-N6)-methyltransferase (441 aa).

The region spanning 30 to 168 (TEPVGYLESC…YIAEYDSPQN (139 aa)) is the TsaA-like domain. S-adenosyl-L-methionine-binding positions include 47 to 49 (PRQ), 90 to 91 (HK), R117, L127, and 148 to 151 (IHGT). Over residues 179–192 (QNNQHTPNTVSQSD) the composition is skewed to polar residues. Disordered stretches follow at residues 179-231 (QNNQ…EENY) and 264-284 (SSVA…SEKG).

The protein belongs to the tRNA methyltransferase O family.

The enzyme catalyses N(6)-L-threonylcarbamoyladenosine(37) in tRNA + S-adenosyl-L-methionine = N(6)-methyl,N(6)-L-threonylcarbamoyladenosine(37) in tRNA + S-adenosyl-L-homocysteine + H(+). Its function is as follows. S-adenosyl-L-methionine-dependent methyltransferase responsible for the addition of the methyl group in the formation of N6-methyl-N6-threonylcarbamoyladenosine at position 37 (m(6)t(6)A37) of the tRNA anticodon loop of tRNA(Ser)(GCU). The methyl group of m(6)t(6)A37 may improve the efficiency of the tRNA decoding ability. This Homo sapiens (Human) protein is tRNA (adenine(37)-N6)-methyltransferase.